Here is a 130-residue protein sequence, read N- to C-terminus: Ribosome biogenesis inhibitor MINAS-60 (130 aa).

The segment at S61 to C130 is disordered. Positions K109 to C130 are enriched in basic residues.

In terms of assembly, interacts with 60S ribosome assembly factors GTPBP4 and MRTO4.

The protein localises to the nucleus. Its subcellular location is the nucleolus. Functionally, acts as a late-stage inhibitor of pre-60S ribosome assembly by preventing pre-60S ribosome export from nucleus. The polypeptide is Ribosome biogenesis inhibitor MINAS-60 (Mus musculus (Mouse)).